Reading from the N-terminus, the 326-residue chain is Nine-heme cytochrome c (326 aa).

A signal peptide spans 1 to 30; sequence MRNGTSLLLLAAIALAGAACLTAMGGTAKA. Residues His-67, His-70, Cys-77, Cys-80, His-81, His-82, Cys-89, Cys-92, His-93, His-111, Cys-127, Cys-130, His-131, Cys-141, Cys-144, His-145, Cys-157, Cys-160, His-161, His-227, His-230, His-248, Cys-255, Cys-258, His-259, His-260, Cys-271, Cys-274, His-275, His-294, Cys-297, Cys-300, His-301, Cys-314, Cys-317, and His-318 each contribute to the heme site.

As to quaternary structure, monomer. In terms of processing, binds 9 heme groups per subunit.

It is found in the periplasm. Functionally, may form part of a transmembrane redox complex through which electrons are transferred to the cytoplasm for reduction of sulfate. This chain is Nine-heme cytochrome c, found in Desulfovibrio desulfuricans (strain ATCC 27774 / DSM 6949 / MB).